We begin with the raw amino-acid sequence, 451 residues long: Probable asparagine--tRNA ligase, cytoplasmic (451 aa).

It belongs to the class-II aminoacyl-tRNA synthetase family.

It is found in the cytoplasm. It catalyses the reaction tRNA(Asn) + L-asparagine + ATP = L-asparaginyl-tRNA(Asn) + AMP + diphosphate + H(+). This chain is Probable asparagine--tRNA ligase, cytoplasmic, found in Encephalitozoon cuniculi (strain GB-M1) (Microsporidian parasite).